A 100-amino-acid chain; its full sequence is Omega-hexatoxin-Asp2b (100 aa).

The first 23 residues, 1–23 (MKFSKLSITLAVILTQAVFVLCG), serve as a signal peptide directing secretion. The propeptide occupies 24 to 55 (MKNEDFMEKGLESNELHDAIKKPVNSGKPDTE). Intrachain disulfides connect cysteine 60–cysteine 73, cysteine 66–cysteine 79, and cysteine 72–cysteine 84.

This sequence belongs to the neurotoxin 15 family. 02 (omega-actx) subfamily. In terms of tissue distribution, expressed by the venom gland.

It localises to the secreted. Its function is as follows. Potent inhibitor of insect, but not mammalian, voltage-gated calcium channels (Cav). The protein is Omega-hexatoxin-Asp2b of Atrax sp. (strain Illawarra) (Funnel-web spider).